A 263-amino-acid polypeptide reads, in one-letter code: Probable 6-oxopurine nucleoside phosphorylase (263 aa).

Phosphate contacts are provided by residues Thr-9, 49–50, and 82–83; these read RH and TA. Met-181 is a substrate binding site. Thr-182 is a binding site for phosphate. Position 205-207 (205-207) interacts with substrate; the sequence is NYA.

It belongs to the PNP/MTAP phosphorylase family. MTAP subfamily. In terms of assembly, homohexamer. Dimer of a homotrimer.

It carries out the reaction a purine D-ribonucleoside + phosphate = a purine nucleobase + alpha-D-ribose 1-phosphate. The protein operates within purine metabolism; purine nucleoside salvage. Functionally, purine nucleoside phosphorylase which is highly specific for 6-oxopurine nucleosides. Cleaves guanosine or inosine to respective bases and sugar-1-phosphate molecules. Involved in purine salvage. This chain is Probable 6-oxopurine nucleoside phosphorylase, found in Dictyoglomus turgidum (strain DSM 6724 / Z-1310).